Reading from the N-terminus, the 54-residue chain is Rubredoxin (54 aa).

In terms of domain architecture, Rubredoxin-like spans 2 to 52 (AKWVCKICGYIYDEDAGDPDNGISPGTKFEELPDDWVCPICGAPKSEFEKL). The Fe cation site is built by Cys-6, Cys-9, Cys-39, and Cys-42.

It belongs to the rubredoxin family. Fe(3+) serves as cofactor.

Functionally, rubredoxin is a small nonheme, iron protein lacking acid-labile sulfide. Its single Fe, chelated to 4 Cys, functions as an electron acceptor and may also stabilize the conformation of the molecule. The protein is Rubredoxin (rub) of Pyrococcus furiosus (strain ATCC 43587 / DSM 3638 / JCM 8422 / Vc1).